Consider the following 182-residue polypeptide: Photosystem I assembly protein Ycf4 (182 aa).

A run of 2 helical transmembrane segments spans residues 22–42 (WAIIIGSGGLGFLFTGLSSYL) and 66–86 (FYGILGIFFSLYLGLTILFSV).

It belongs to the Ycf4 family.

The protein resides in the plastid. The protein localises to the chloroplast thylakoid membrane. In terms of biological role, seems to be required for the assembly of the photosystem I complex. This Tupiella akineta (Green alga) protein is Photosystem I assembly protein Ycf4.